Reading from the N-terminus, the 72-residue chain is Translation initiation factor IF-1 (72 aa).

Residues 1–72 (MSKEGKITLK…TRGRIIYRIS (72 aa)) form the S1-like domain.

This sequence belongs to the IF-1 family. As to quaternary structure, component of the 30S ribosomal translation pre-initiation complex which assembles on the 30S ribosome in the order IF-2 and IF-3, IF-1 and N-formylmethionyl-tRNA(fMet); mRNA recruitment can occur at any time during PIC assembly.

Its subcellular location is the cytoplasm. One of the essential components for the initiation of protein synthesis. Stabilizes the binding of IF-2 and IF-3 on the 30S subunit to which N-formylmethionyl-tRNA(fMet) subsequently binds. Helps modulate mRNA selection, yielding the 30S pre-initiation complex (PIC). Upon addition of the 50S ribosomal subunit IF-1, IF-2 and IF-3 are released leaving the mature 70S translation initiation complex. This is Translation initiation factor IF-1 from Malacoplasma penetrans (strain HF-2) (Mycoplasma penetrans).